The primary structure comprises 429 residues: Adenylosuccinate synthetase (429 aa).

GTP is bound by residues 15 to 21 (GDEGKGK) and 43 to 45 (GHV). Asp16 acts as the Proton acceptor in catalysis. Mg(2+) contacts are provided by Asp16 and Gly43. Residues 16 to 19 (DEGK), 41 to 44 (NAGH), Thr131, Arg145, Gln225, Thr240, and Arg304 each bind IMP. His44 functions as the Proton donor in the catalytic mechanism. A substrate-binding site is contributed by 300–306 (SNTKRPR). GTP-binding positions include Arg306, 332–334 (LLD), and 414–416 (SVG).

It belongs to the adenylosuccinate synthetase family. Homodimer. Mg(2+) serves as cofactor.

Its subcellular location is the cytoplasm. It carries out the reaction IMP + L-aspartate + GTP = N(6)-(1,2-dicarboxyethyl)-AMP + GDP + phosphate + 2 H(+). It functions in the pathway purine metabolism; AMP biosynthesis via de novo pathway; AMP from IMP: step 1/2. Plays an important role in the de novo pathway of purine nucleotide biosynthesis. Catalyzes the first committed step in the biosynthesis of AMP from IMP. This chain is Adenylosuccinate synthetase, found in Mesoplasma florum (strain ATCC 33453 / NBRC 100688 / NCTC 11704 / L1) (Acholeplasma florum).